Here is a 515-residue protein sequence, read N- to C-terminus: 2-isopropylmalate synthase (515 aa).

The region spanning Val-5–His-267 is the Pyruvate carboxyltransferase domain. Asp-14, His-202, His-204, and Asn-238 together coordinate Mn(2+). The segment at Lys-392–Val-515 is regulatory domain.

It belongs to the alpha-IPM synthase/homocitrate synthase family. LeuA type 1 subfamily. As to quaternary structure, homodimer. Requires Mn(2+) as cofactor.

The protein resides in the cytoplasm. It carries out the reaction 3-methyl-2-oxobutanoate + acetyl-CoA + H2O = (2S)-2-isopropylmalate + CoA + H(+). It functions in the pathway amino-acid biosynthesis; L-leucine biosynthesis; L-leucine from 3-methyl-2-oxobutanoate: step 1/4. Catalyzes the condensation of the acetyl group of acetyl-CoA with 3-methyl-2-oxobutanoate (2-ketoisovalerate) to form 3-carboxy-3-hydroxy-4-methylpentanoate (2-isopropylmalate). This chain is 2-isopropylmalate synthase, found in Vibrio atlanticus (strain LGP32) (Vibrio splendidus (strain Mel32)).